A 208-amino-acid chain; its full sequence is Thymidylate kinase (208 aa).

10–17 (GPEGSGKT) is an ATP binding site.

This sequence belongs to the thymidylate kinase family.

The enzyme catalyses dTMP + ATP = dTDP + ADP. Phosphorylation of dTMP to form dTDP in both de novo and salvage pathways of dTTP synthesis. The protein is Thymidylate kinase of Bacillus cereus (strain 03BB102).